The chain runs to 339 residues: Dihydroorotate dehydrogenase (quinone) (339 aa).

Residues 64 to 68 (AGADK) and Thr-88 contribute to the FMN site. Lys-68 serves as a coordination point for substrate. 113 to 117 (NRNGF) provides a ligand contact to substrate. 2 residues coordinate FMN: Asn-141 and Asn-174. Asn-174 serves as a coordination point for substrate. Residue Ser-177 is the Nucleophile of the active site. Position 179 (Asn-179) interacts with substrate. The FMN site is built by Lys-219 and Thr-247. 248-249 (NT) serves as a coordination point for substrate. FMN contacts are provided by residues Gly-270, Gly-299, and 320–321 (YS).

This sequence belongs to the dihydroorotate dehydrogenase family. Type 2 subfamily. As to quaternary structure, monomer. Requires FMN as cofactor.

It localises to the cell membrane. The catalysed reaction is (S)-dihydroorotate + a quinone = orotate + a quinol. The protein operates within pyrimidine metabolism; UMP biosynthesis via de novo pathway; orotate from (S)-dihydroorotate (quinone route): step 1/1. Catalyzes the conversion of dihydroorotate to orotate with quinone as electron acceptor. The protein is Dihydroorotate dehydrogenase (quinone) of Haemophilus influenzae (strain PittGG).